Here is an 80-residue protein sequence, read N- to C-terminus: Inner kinetochore subunit MHF2 (80 aa).

The protein belongs to the CENP-X/MHF2 family. In terms of assembly, the MHF histone-fold complex is a heterotetramer of 2 MHF1-MHF2 heterodimers. Together with MPH1/FANCM, forms the FANCM-MHF complex. Component of the inner kinetochore constitutive centromere-associated network (CCAN) (also known as central kinetochore CTF19 complex in yeast), which is composed of at least AME1, CHL4, CNN1, CTF3, CTF19, IML3, MCM16, MCM21, MCM22, MHF1, MHF2, MIF2, NKP1, NKP2, OKP1 and WIP1.

In terms of biological role, DNA-binding component of a FANCM-MHF complex involved in DNA damage repair and genome maintenance. FANCM-MHF promotes gene conversion at blocked replication forks, probably by reversal of the stalled fork. Component of the kinetochore, a multiprotein complex that assembles on centromeric DNA and attaches chromosomes to spindle microtubules, mediating chromosome segregation and sister chromatid segregation during meiosis and mitosis. Component of the inner kinetochore constitutive centromere-associated network (CCAN), which serves as a structural platform for outer kinetochore assembly. The protein is Inner kinetochore subunit MHF2 of Saccharomyces cerevisiae (strain ATCC 204508 / S288c) (Baker's yeast).